The sequence spans 306 residues: ATP synthase F(1) complex subunit gamma, mitochondrial (306 aa).

The transit peptide at 1 to 17 directs the protein to the mitochondrion; it reads MNSASKLFVVLASPANQ.

The protein belongs to the ATPase gamma chain family. Component of the ATP synthase complex composed at least of ATP5F1A/subunit alpha, ATP5F1B/subunit beta, ATP5MC1/subunit c (homooctomer), MT-ATP6/subunit a, MT-ATP8/subunit 8, ATP5ME/subunit e, ATP5MF/subunit f, ATP5MG/subunit g, ATP5MK/subunit k, ATP5MJ/subunit j, ATP5F1C/subunit gamma, ATP5F1D/subunit delta, ATP5F1E/subunit epsilon, ATP5PF/subunit F6, ATP5PB/subunit b, ATP5PD/subunit d, ATP5PO/subunit OSCP. ATP synthase complex consists of a soluble F(1) head domain (subunits alpha(3) and beta(3)) - the catalytic core - and a membrane F(0) domain - the membrane proton channel (subunits c, a, 8, e, f, g, k and j). These two domains are linked by a central stalk (subunits gamma, delta, and epsilon) rotating inside the F1 region and a stationary peripheral stalk (subunits F6, b, d, and OSCP).

It localises to the mitochondrion inner membrane. Its function is as follows. Subunit gamma, of the mitochondrial membrane ATP synthase complex (F(1)F(0) ATP synthase or Complex V) that produces ATP from ADP in the presence of a proton gradient across the membrane which is generated by electron transport complexes of the respiratory chain. ATP synthase complex consist of a soluble F(1) head domain - the catalytic core - and a membrane F(1) domain - the membrane proton channel. These two domains are linked by a central stalk rotating inside the F(1) region and a stationary peripheral stalk. During catalysis, ATP synthesis in the catalytic domain of F(1) is coupled via a rotary mechanism of the central stalk subunits to proton translocation. In vivo, can only synthesize ATP although its ATP hydrolase activity can be activated artificially in vitro. With the central stalk subunit delta, is essential for the biogenesis of F(1) catalytic part of the ATP synthase complex namely in the formation of F1 assembly intermediate. The polypeptide is ATP synthase F(1) complex subunit gamma, mitochondrial (Dictyostelium discoideum (Social amoeba)).